A 327-amino-acid polypeptide reads, in one-letter code: MTLDVSKVQTPMRIDRYLTQQVENMTRNKVQAAIEEGRVLVNGKPVKSNYRVKSCDHIHLTFLRPPAPELAPEDIPITILYEDDDLMVIDKEAGMVVHPAFGNWTGTLANAILHHLGKDADELDKTEMRPGIVHRLDKDTSGLIIIAKNPTALHKLARQFANRQVEKVYKAIVWGVPKAESGTIKTNIGRSHKNRKVMANFPYEGAEGKHAITDYQVVEDLGYFSLMDVTLHTGRTHQIRVHLQHLGHSILGDETYGGATPRTLPFSKSEPFTRNLLELMSRQALHAQTLRFRQPTTGEPLSFSAPLPEDMELVLEKIRTVMTASQS.

The region spanning 12-84 (MRIDRYLTQQ…IPITILYEDD (73 aa)) is the S4 RNA-binding domain. The active site involves Asp137.

This sequence belongs to the pseudouridine synthase RluA family.

It carries out the reaction a uridine in RNA = a pseudouridine in RNA. This is an uncharacterized protein from Chlorobaculum parvum (strain DSM 263 / NCIMB 8327) (Chlorobium vibrioforme subsp. thiosulfatophilum).